Consider the following 339-residue polypeptide: DNA-directed RNA polymerase subunit alpha (339 aa).

Positions 1–235 (MTIQKNWQEL…DQLNVFVNFE (235 aa)) are alpha N-terminal domain (alpha-NTD). The tract at residues 251–339 (FNPAFLKKVD…ELAKRFEDHY (89 aa)) is alpha C-terminal domain (alpha-CTD).

It belongs to the RNA polymerase alpha chain family. As to quaternary structure, homodimer. The RNAP catalytic core consists of 2 alpha, 1 beta, 1 beta' and 1 omega subunit. When a sigma factor is associated with the core the holoenzyme is formed, which can initiate transcription.

The enzyme catalyses RNA(n) + a ribonucleoside 5'-triphosphate = RNA(n+1) + diphosphate. Functionally, DNA-dependent RNA polymerase catalyzes the transcription of DNA into RNA using the four ribonucleoside triphosphates as substrates. The polypeptide is DNA-directed RNA polymerase subunit alpha (Rhodopseudomonas palustris (strain ATCC BAA-98 / CGA009)).